We begin with the raw amino-acid sequence, 331 residues long: Taste receptor type 2 member 38 (331 aa).

Residues 1–17 (MLTLTPVLTVSYEAKIS) are Extracellular-facing. Residues 18 to 38 (FLFLSVVEFAVGIMANAFIVL) form a helical membrane-spanning segment. Residues 39–54 (VNFWDMVKKQPLNNCD) lie on the Cytoplasmic side of the membrane. A helical membrane pass occupies residues 55–75 (IALLCLSITRLFLQGLLLLDA). The Extracellular segment spans residues 76-94 (IQLACFQQMKDPLSHNYQA). The helical transmembrane segment at 95–115 (ILTLWMSANQVSLWLAACLSL) threads the bilayer. The Cytoplasmic segment spans residues 116–142 (LYCAKIVRFSHTFPLHLASWVSRRFLQ). Residues 143–163 (MLLVALLFSGVCTALCLWDFF) form a helical membrane-spanning segment. The Extracellular portion of the chain corresponds to 164 to 198 (SRSHTVVTSMLHMNNTEFNLQIEKLNFFYSFVFCN). An N-linked (GlcNAc...) asparagine glycan is attached at N177. The chain crosses the membrane as a helical span at residues 199 to 219 (VGSVPPSLVFLISSGVLVISL). Residues 220-243 (GNHMRTMKSQTRGSRDPSLEAHVR) are Cytoplasmic-facing. The helical transmembrane segment at 244–264 (AIIFLVSFLCFYVVSFCAALI) threads the bilayer. The Extracellular portion of the chain corresponds to 265–276 (SIPLLVLWHNKG). The chain crosses the membrane as a helical span at residues 277 to 297 (GVMVCIGMMAACPSGHAAILI). Residues 298–331 (SGNAKLKKVIVTILFWFQSRQKVRRVHKVLPRIL) are Cytoplasmic-facing.

It belongs to the G-protein coupled receptor T2R family. Expressed in tongue, stomach and duodenum.

It is found in the membrane. Functionally, putative taste receptor which may play a role in the perception of bitterness. The protein is Taste receptor type 2 member 38 (Tas2r38) of Rattus norvegicus (Rat).